Here is a 257-residue protein sequence, read N- to C-terminus: Small ribosomal subunit protein uS2 (257 aa).

Belongs to the universal ribosomal protein uS2 family.

This chain is Small ribosomal subunit protein uS2, found in Bartonella quintana (strain Toulouse) (Rochalimaea quintana).